Here is a 457-residue protein sequence, read N- to C-terminus: Exodeoxyribonuclease 7 large subunit (457 aa).

This sequence belongs to the XseA family. As to quaternary structure, heterooligomer composed of large and small subunits.

Its subcellular location is the cytoplasm. The enzyme catalyses Exonucleolytic cleavage in either 5'- to 3'- or 3'- to 5'-direction to yield nucleoside 5'-phosphates.. Functionally, bidirectionally degrades single-stranded DNA into large acid-insoluble oligonucleotides, which are then degraded further into small acid-soluble oligonucleotides. The chain is Exodeoxyribonuclease 7 large subunit from Photorhabdus laumondii subsp. laumondii (strain DSM 15139 / CIP 105565 / TT01) (Photorhabdus luminescens subsp. laumondii).